A 180-amino-acid polypeptide reads, in one-letter code: MATRLKEKYTSEIVPSLMSKFNYTSIMQVPKVEKIIINMGVGEAVANAKSLDTAIEDLQIIAGQKPVVTKAKKSIAGFKLREGMPIGAKVTLRGERMYHFLDKLMNVSLPRVRDFRGISSKAFDGRGNYTLGLKEQLIFPEIEYDKIDKVRGMDIVVVTSAKTDEEARELLTQMGMPFRK.

The protein belongs to the universal ribosomal protein uL5 family. In terms of assembly, part of the 50S ribosomal subunit; part of the 5S rRNA/L5/L18/L25 subcomplex. Contacts the 5S rRNA and the P site tRNA. Forms a bridge to the 30S subunit in the 70S ribosome.

Functionally, this is one of the proteins that bind and probably mediate the attachment of the 5S RNA into the large ribosomal subunit, where it forms part of the central protuberance. In the 70S ribosome it contacts protein S13 of the 30S subunit (bridge B1b), connecting the 2 subunits; this bridge is implicated in subunit movement. Contacts the P site tRNA; the 5S rRNA and some of its associated proteins might help stabilize positioning of ribosome-bound tRNAs. The polypeptide is Large ribosomal subunit protein uL5 (Brevibacillus brevis (strain 47 / JCM 6285 / NBRC 100599)).